We begin with the raw amino-acid sequence, 397 residues long: Arginine biosynthesis bifunctional protein ArgJ (397 aa).

Threonine 147, lysine 173, threonine 184, glutamate 270, asparagine 392, and threonine 397 together coordinate substrate. Threonine 184 (nucleophile) is an active-site residue.

This sequence belongs to the ArgJ family. In terms of assembly, heterotetramer of two alpha and two beta chains.

It is found in the cytoplasm. The catalysed reaction is N(2)-acetyl-L-ornithine + L-glutamate = N-acetyl-L-glutamate + L-ornithine. It catalyses the reaction L-glutamate + acetyl-CoA = N-acetyl-L-glutamate + CoA + H(+). It participates in amino-acid biosynthesis; L-arginine biosynthesis; L-ornithine and N-acetyl-L-glutamate from L-glutamate and N(2)-acetyl-L-ornithine (cyclic): step 1/1. Its pathway is amino-acid biosynthesis; L-arginine biosynthesis; N(2)-acetyl-L-ornithine from L-glutamate: step 1/4. Catalyzes two activities which are involved in the cyclic version of arginine biosynthesis: the synthesis of N-acetylglutamate from glutamate and acetyl-CoA as the acetyl donor, and of ornithine by transacetylation between N(2)-acetylornithine and glutamate. This Streptococcus thermophilus (strain ATCC BAA-250 / LMG 18311) protein is Arginine biosynthesis bifunctional protein ArgJ.